The primary structure comprises 376 residues: Succinyl-diaminopimelate desuccinylase (376 aa).

Histidine 67 provides a ligand contact to Zn(2+). Aspartate 69 is a catalytic residue. Aspartate 100 lines the Zn(2+) pocket. Residue glutamate 134 is the Proton acceptor of the active site. Zn(2+) contacts are provided by glutamate 135, glutamate 163, and histidine 349.

This sequence belongs to the peptidase M20A family. DapE subfamily. In terms of assembly, homodimer. Zn(2+) is required as a cofactor. Requires Co(2+) as cofactor.

The enzyme catalyses N-succinyl-(2S,6S)-2,6-diaminopimelate + H2O = (2S,6S)-2,6-diaminopimelate + succinate. It functions in the pathway amino-acid biosynthesis; L-lysine biosynthesis via DAP pathway; LL-2,6-diaminopimelate from (S)-tetrahydrodipicolinate (succinylase route): step 3/3. Functionally, catalyzes the hydrolysis of N-succinyl-L,L-diaminopimelic acid (SDAP), forming succinate and LL-2,6-diaminopimelate (DAP), an intermediate involved in the bacterial biosynthesis of lysine and meso-diaminopimelic acid, an essential component of bacterial cell walls. The sequence is that of Succinyl-diaminopimelate desuccinylase from Xanthomonas campestris pv. campestris (strain 8004).